The following is a 243-amino-acid chain: Ribonuclease PH (243 aa).

Residues arginine 91 and glycine 129 to arginine 131 each bind phosphate.

It belongs to the RNase PH family. Homohexameric ring arranged as a trimer of dimers.

It carries out the reaction tRNA(n+1) + phosphate = tRNA(n) + a ribonucleoside 5'-diphosphate. In terms of biological role, phosphorolytic 3'-5' exoribonuclease that plays an important role in tRNA 3'-end maturation. Removes nucleotide residues following the 3'-CCA terminus of tRNAs; can also add nucleotides to the ends of RNA molecules by using nucleoside diphosphates as substrates, but this may not be physiologically important. Probably plays a role in initiation of 16S rRNA degradation (leading to ribosome degradation) during starvation. The sequence is that of Ribonuclease PH from Burkholderia pseudomallei (strain 668).